The sequence spans 362 residues: Serine/threonine-protein kinase ZRK4 (362 aa).

The disordered stretch occupies residues 1-23 (MNDQKMSCWRKKSKKKNSEANQR). The 328-residue stretch at 35–362 (LEDLIELCNG…KELKRIERWT (328 aa)) folds into the Protein kinase domain. ATP is bound by residues 41–49 (LCNGKSNPI) and Lys-89. Asp-185 (proton acceptor) is an active-site residue.

This sequence belongs to the protein kinase superfamily. Ser/Thr protein kinase family. ZRK subfamily.

It catalyses the reaction L-seryl-[protein] + ATP = O-phospho-L-seryl-[protein] + ADP + H(+). The enzyme catalyses L-threonyl-[protein] + ATP = O-phospho-L-threonyl-[protein] + ADP + H(+). The chain is Serine/threonine-protein kinase ZRK4 from Arabidopsis thaliana (Mouse-ear cress).